The primary structure comprises 471 residues: MAGATGVVTDIIGVVLNAKFPEDQTPEIYNALEIRLENGKRLVAEVQQQLGGGVVKAVAMSSTDGMRRGVKAIDTGRPIAVPVGPGTLGRVFDVLGDPIDGEGPVQATEYRPIHRPPPALEDQSTTAQIFETGIKVIDLIAPFTRGGKTGIFGGAGVGKTVVIQELIANVAKEQSGFSVFAGVGERSREGNDLIHEMKEARIDEQTRVFDKTVMVFGQMNEPPGARLRVALTAMTMAEYFRDEGRDVLLFIDNIFRFVQAGSEVSALLGRMPSQVGYQPTLGTEMGELQERITSTKKGSITSMQAVYVPADDYTDPAPATVFSHLDATITLERSIAAKGIYPAVDPLASTSRILDPNIVGAEHYRVAREVQRVLQRYKDLQDIIAILGVEELSDDDKLTVARARKIERFFSQPFTVAQQFTGRPGKYVPIAETVKSFARLLAGEVDHIPEQFFLLQGGLDDVIQAYEASRR.

153 to 160 (GGAGVGKT) is a binding site for ATP.

It belongs to the ATPase alpha/beta chains family. In terms of assembly, F-type ATPases have 2 components, CF(1) - the catalytic core - and CF(0) - the membrane proton channel. CF(1) has five subunits: alpha(3), beta(3), gamma(1), delta(1), epsilon(1). CF(0) has four main subunits: a(1), b(1), b'(1) and c(9-12).

The protein localises to the cell membrane. The enzyme catalyses ATP + H2O + 4 H(+)(in) = ADP + phosphate + 5 H(+)(out). Produces ATP from ADP in the presence of a proton gradient across the membrane. The catalytic sites are hosted primarily by the beta subunits. The polypeptide is ATP synthase subunit beta (Roseiflexus sp. (strain RS-1)).